The primary structure comprises 297 residues: HTH-type transcriptional regulator ArgP (297 aa).

The region spanning 4–60 (PDYRTLQALDAVIRERGFERAAQKLCITQSAVSQRIKQLENMFGQPLLVRTVPPRPT) is the HTH lysR-type domain. The H-T-H motif DNA-binding region spans 21–40 (FERAAQKLCITQSAVSQRIK).

Belongs to the LysR transcriptional regulatory family. As to quaternary structure, homodimer.

In terms of biological role, controls the transcription of genes involved in arginine and lysine metabolism. This is HTH-type transcriptional regulator ArgP from Salmonella arizonae (strain ATCC BAA-731 / CDC346-86 / RSK2980).